The sequence spans 388 residues: Ferrochelatase (388 aa).

Fe cation-binding residues include His-196 and Glu-277.

Belongs to the ferrochelatase family.

It localises to the cytoplasm. It catalyses the reaction heme b + 2 H(+) = protoporphyrin IX + Fe(2+). Its pathway is porphyrin-containing compound metabolism; protoheme biosynthesis; protoheme from protoporphyrin-IX: step 1/1. Its function is as follows. Catalyzes the ferrous insertion into protoporphyrin IX. This is Ferrochelatase from Trichormus variabilis (strain ATCC 29413 / PCC 7937) (Anabaena variabilis).